The primary structure comprises 207 residues: Outer-membrane lipoprotein LolB (207 aa).

The signal sequence occupies residues 1–21; that stretch reads MTLPDFRLIRLLPLASLVLTA. The N-palmitoyl cysteine moiety is linked to residue Cys22. Cys22 is lipidated: S-diacylglycerol cysteine.

Belongs to the LolB family. As to quaternary structure, monomer.

Its subcellular location is the cell outer membrane. Functionally, plays a critical role in the incorporation of lipoproteins in the outer membrane after they are released by the LolA protein. The sequence is that of Outer-membrane lipoprotein LolB from Salmonella typhi.